The following is a 386-amino-acid chain: Bifunctional enzyme IspD/IspF (386 aa).

Positions 1-229 (MIRGERVIGI…RARALLEAPV (229 aa)) are 2-C-methyl-D-erythritol 4-phosphate cytidylyltransferase. The interval 230–386 (ATGVGYDTHR…AIALLVRAAG (157 aa)) is 2-C-methyl-D-erythritol 2,4-cyclodiphosphate synthase. A divalent metal cation is bound by residues Asp-236 and His-238. Residues 236–238 (DTH) and 261–262 (HS) contribute to the 4-CDP-2-C-methyl-D-erythritol 2-phosphate site. His-269 lines the a divalent metal cation pocket. Residues 283 to 285 (DLG), 288 to 292 (FPDTD), 359 to 362 (TTGE), Phe-366, and Arg-369 contribute to the 4-CDP-2-C-methyl-D-erythritol 2-phosphate site.

This sequence in the N-terminal section; belongs to the IspD/TarI cytidylyltransferase family. IspD subfamily. The protein in the C-terminal section; belongs to the IspF family. The cofactor is a divalent metal cation.

It carries out the reaction 2-C-methyl-D-erythritol 4-phosphate + CTP + H(+) = 4-CDP-2-C-methyl-D-erythritol + diphosphate. The enzyme catalyses 4-CDP-2-C-methyl-D-erythritol 2-phosphate = 2-C-methyl-D-erythritol 2,4-cyclic diphosphate + CMP. The protein operates within isoprenoid biosynthesis; isopentenyl diphosphate biosynthesis via DXP pathway; isopentenyl diphosphate from 1-deoxy-D-xylulose 5-phosphate: step 2/6. It functions in the pathway isoprenoid biosynthesis; isopentenyl diphosphate biosynthesis via DXP pathway; isopentenyl diphosphate from 1-deoxy-D-xylulose 5-phosphate: step 4/6. Its function is as follows. Bifunctional enzyme that catalyzes the formation of 4-diphosphocytidyl-2-C-methyl-D-erythritol from CTP and 2-C-methyl-D-erythritol 4-phosphate (MEP) (IspD), and catalyzes the conversion of 4-diphosphocytidyl-2-C-methyl-D-erythritol 2-phosphate (CDP-ME2P) to 2-C-methyl-D-erythritol 2,4-cyclodiphosphate (ME-CPP) with a corresponding release of cytidine 5-monophosphate (CMP) (IspF). The chain is Bifunctional enzyme IspD/IspF from Anaeromyxobacter dehalogenans (strain 2CP-C).